The primary structure comprises 207 residues: MTIRYPNGQVYRQPGPTKSKSSKFANVNFGDRGMSLEQEINDSNAYYLENNIAVIHKKPTPIQIVKVDYPKRSAAVIREAYFKQASTTDYNGVYRGKYLDFEAKETKNKTAFPLKNFHEHQIKHMRQCLAQSGICFVIIRFASLGRLFLLTASDLFTYWDHQGDGGRKSIPLTDIEHLAAELHYQINPRIPYLDALDHIIDETSSIH.

The interval 1-21 (MTIRYPNGQVYRQPGPTKSKS) is disordered. Positions 87, 89, 102, and 121 each coordinate Mg(2+).

The protein belongs to the RecU family. Requires Mg(2+) as cofactor.

It localises to the cytoplasm. It carries out the reaction Endonucleolytic cleavage at a junction such as a reciprocal single-stranded crossover between two homologous DNA duplexes (Holliday junction).. Its function is as follows. Endonuclease that resolves Holliday junction intermediates in genetic recombination. Cleaves mobile four-strand junctions by introducing symmetrical nicks in paired strands. Promotes annealing of linear ssDNA with homologous dsDNA. Required for DNA repair, homologous recombination and chromosome segregation. This Lactiplantibacillus plantarum (strain ATCC BAA-793 / NCIMB 8826 / WCFS1) (Lactobacillus plantarum) protein is Holliday junction resolvase RecU.